The primary structure comprises 336 residues: Fructokinase-2 (336 aa).

The protein belongs to the carbohydrate kinase PfkB family. As to expression, expressed in stem, sheaths, anthers, and panicles (at protein level).

The enzyme catalyses D-fructose + ATP = D-fructose 6-phosphate + ADP + H(+). The protein operates within glycan biosynthesis; starch biosynthesis. Its activity is regulated as follows. Strongly inhibited at high fructose concentration. Functionally, may play an important role in maintaining the flux of carbon towards starch formation in endosperm. May also be involved in a sugar-sensing pathway. In Oryza sativa subsp. japonica (Rice), this protein is Fructokinase-2 (FRK2).